The following is a 613-amino-acid chain: 4-hydroxy-3-methylbut-2-en-1-yl diphosphate synthase (flavodoxin) (613 aa).

Positions 521, 524, 555, and 562 each coordinate [4Fe-4S] cluster.

The protein belongs to the IspG family. The cofactor is [4Fe-4S] cluster.

It catalyses the reaction (2E)-4-hydroxy-3-methylbut-2-enyl diphosphate + oxidized [flavodoxin] + H2O + 2 H(+) = 2-C-methyl-D-erythritol 2,4-cyclic diphosphate + reduced [flavodoxin]. The protein operates within isoprenoid biosynthesis; isopentenyl diphosphate biosynthesis via DXP pathway; isopentenyl diphosphate from 1-deoxy-D-xylulose 5-phosphate: step 5/6. Converts 2C-methyl-D-erythritol 2,4-cyclodiphosphate (ME-2,4cPP) into 1-hydroxy-2-methyl-2-(E)-butenyl 4-diphosphate. This Bacteroides thetaiotaomicron (strain ATCC 29148 / DSM 2079 / JCM 5827 / CCUG 10774 / NCTC 10582 / VPI-5482 / E50) protein is 4-hydroxy-3-methylbut-2-en-1-yl diphosphate synthase (flavodoxin).